Reading from the N-terminus, the 476-residue chain is Ubiquinone biosynthesis monooxygenase COQ6, mitochondrial (476 aa).

The transit peptide at 1–42 directs the protein to the mitochondrion; it reads MAARIGPMAGLLCVRWWSTAQLAARGGPLVACRRWTSSSTDS.

It belongs to the UbiH/COQ6 family. In terms of assembly, component of a multi-subunit COQ enzyme complex, composed of at least COQ3, COQ4, COQ5, COQ6, COQ7 and COQ9. Interacts with COQ8B and COQ7. FAD is required as a cofactor. In terms of tissue distribution, in the kidney, expressed almost exclusively in glomerular podocytes. In the inner ear, expressed in the spiral ganglion, as well as in stria vascularis and spiral ligament cells.

The protein localises to the mitochondrion inner membrane. The protein resides in the golgi apparatus. It is found in the cell projection. It catalyses the reaction 4-hydroxy-3-(all-trans-decaprenyl)benzoate + 2 reduced [2Fe-2S]-[ferredoxin] + O2 + 2 H(+) = 3,4-dihydroxy-5-(all-trans-decaprenyl)benzoate + 2 oxidized [2Fe-2S]-[ferredoxin] + H2O. It carries out the reaction 2-methoxy-6-(all-trans-decaprenyl)phenol + 2 reduced [2Fe-2S]-[ferredoxin] + O2 + 2 H(+) = 2-methoxy-6-(all-trans-decaprenyl)benzene-1,4-diol + 2 oxidized [2Fe-2S]-[ferredoxin] + H2O. The protein operates within cofactor biosynthesis; ubiquinone biosynthesis. Functionally, FAD-dependent monooxygenase required for two non-consecutive steps during ubiquinone biosynthesis. Required for the C5-ring hydroxylation during ubiquinone biosynthesis by catalyzing the hydroxylation of 4-hydroxy-3-(all-trans-decaprenyl)benzoic acid to 3,4-dihydroxy-5-(all-trans-decaprenyl)benzoic acid. Also acts downstream of COQ4, for the C1-hydroxylation during ubiquinone biosynthesis by catalyzing the hydroxylation of 2-methoxy-6-(all-trans-decaprenyl)phenol to 2-methoxy-6-(all-trans-decaprenyl)benzene-1,4-diol. The electrons required for the hydroxylation reaction are funneled indirectly to COQ6 from NADPH via a ferredoxin/ferredoxin reductase system composed of FDX2 and FDXR. The polypeptide is Ubiquinone biosynthesis monooxygenase COQ6, mitochondrial (Rattus norvegicus (Rat)).